A 148-amino-acid chain; its full sequence is Transcriptional regulator MraZ (148 aa).

2 SpoVT-AbrB domains span residues 5 to 53 (ETAI…AEKE) and 82 to 125 (SAVL…SEQA).

The protein belongs to the MraZ family. Forms oligomers.

The protein localises to the cytoplasm. Its subcellular location is the nucleoid. The sequence is that of Transcriptional regulator MraZ from Xanthomonas oryzae pv. oryzae (strain MAFF 311018).